The primary structure comprises 231 residues: Ureidoacrylate amidohydrolase RutB (231 aa).

Aspartate 25 functions as the Proton acceptor in the catalytic mechanism. Lysine 134 is a catalytic residue. Cysteine 167 (nucleophile) is an active-site residue.

Belongs to the isochorismatase family. RutB subfamily.

The catalysed reaction is (Z)-3-ureidoacrylate + H2O + H(+) = (Z)-3-aminoacrylate + NH4(+) + CO2. The enzyme catalyses (Z)-3-ureidoacrylate + H2O = (Z)-3-aminoacrylate + carbamate + H(+). It carries out the reaction (Z)-2-methylureidoacrylate + H2O + H(+) = (Z)-2-methylaminoacrylate + NH4(+) + CO2. Functionally, hydrolyzes ureidoacrylate to form aminoacrylate and carbamate. The carbamate hydrolyzes spontaneously, thereby releasing one of the nitrogen atoms of the pyrimidine ring as ammonia and one of its carbon atoms as CO2. The chain is Ureidoacrylate amidohydrolase RutB from Escherichia coli O9:H4 (strain HS).